We begin with the raw amino-acid sequence, 128 residues long: MLSYSTGRRKCAVAQLRFFSGNGKIVVNGCSLDYYFQHNSAFTKIIRSPLKLLNLELLYDFIIVVKGGGLSGQAGAIRLAIARVLAGLSPSNRSSLKSKRYLTRDSRIKERKKYGLKKARKAPQFSKR.

The segment at 106 to 128 is disordered; it reads SRIKERKKYGLKKARKAPQFSKR. Residues 109–128 show a composition bias toward basic residues; sequence KERKKYGLKKARKAPQFSKR.

Belongs to the universal ribosomal protein uS9 family.

The protein localises to the plastid. The protein resides in the chloroplast. The protein is Small ribosomal subunit protein uS9c (rps9) of Cyanidium caldarium (Red alga).